The chain runs to 469 residues: Glutamine synthetase (469 aa).

Positions 13 to 97 constitute a GS beta-grasp domain; that stretch reads KEVRYVDLRF…LRCDIVEPAT (85 aa). A GS catalytic domain is found at 105–469; it reads PRSIAKRAEA…PVEFDMYYSL (365 aa). Residues E130 and E132 each contribute to the Mg(2+) site. E208 contributes to the ATP binding site. The Mg(2+) site is built by E213 and E221. L-glutamate contacts are provided by residues 265-266 and G266; that span reads NG. H270 is a binding site for Mg(2+). ATP contacts are provided by residues 272-274 and S274; that span reads HQS. L-glutamate-binding residues include R322, E328, and R340. Residues R340, R345, and K353 each coordinate ATP. E358 is a Mg(2+) binding site. R360 contacts L-glutamate. Y398 is subject to O-AMP-tyrosine.

This sequence belongs to the glutamine synthetase family. Oligomer of 12 subunits arranged in the form of two hexameric ring. It depends on Mg(2+) as a cofactor.

Its subcellular location is the cytoplasm. It carries out the reaction L-glutamate + NH4(+) + ATP = L-glutamine + ADP + phosphate + H(+). Its activity is regulated as follows. The activity of this enzyme could be controlled by adenylation under conditions of abundant glutamine. Functionally, catalyzes the ATP-dependent biosynthesis of glutamine from glutamate and ammonia. This Methylococcus capsulatus (strain ATCC 33009 / NCIMB 11132 / Bath) protein is Glutamine synthetase.